The sequence spans 311 residues: MKLAVYGKGGIGKSTVSCNLSIALAKRGKKVLQIGCDPKHDSTFTLTGFLIPTIIDTLQSKDYHYEDIWPEDVIYAGYGGVDCVEAGGPPAGAGCGGYVVGETVKLLKELNAFYEYDVILFDVLGDVVCGGFAAPLNYADYCLIVTDNGFDALFAANRIVASVREKARTHPLRLAGLIGNRTATRELIDKYVEVCRMPVLEVLPLIEEIRISRVKGKTIFELEELEPNLKSIGEYYLNIADQLLAQPEGIVPQELADRDLFTLLSSFYLSDQQTEKAYSSIQHVHGSVGEGCSAQNSEQNQTANDYSFEFI.

Residues 10–15 (GIGKST) and lysine 39 each bind ATP. Mg(2+) is bound at residue serine 14. [4Fe-4S] cluster contacts are provided by cysteine 95 and cysteine 129. Position 180–181 (180–181 (NR)) interacts with ATP.

The protein belongs to the NifH/BchL/ChlL family. As to quaternary structure, homodimer. Protochlorophyllide reductase is composed of three subunits; ChlL, ChlN and ChlB. Requires [4Fe-4S] cluster as cofactor.

Its subcellular location is the plastid. The protein localises to the chloroplast. The catalysed reaction is chlorophyllide a + oxidized 2[4Fe-4S]-[ferredoxin] + 2 ADP + 2 phosphate = protochlorophyllide a + reduced 2[4Fe-4S]-[ferredoxin] + 2 ATP + 2 H2O. The protein operates within porphyrin-containing compound metabolism; chlorophyll biosynthesis (light-independent). Component of the dark-operative protochlorophyllide reductase (DPOR) that uses Mg-ATP and reduced ferredoxin to reduce ring D of protochlorophyllide (Pchlide) to form chlorophyllide a (Chlide). This reaction is light-independent. The L component serves as a unique electron donor to the NB-component of the complex, and binds Mg-ATP. This is Light-independent protochlorophyllide reductase iron-sulfur ATP-binding protein from Oltmannsiellopsis viridis (Marine flagellate).